The chain runs to 294 residues: uncharacterized protein (294 aa).

Positions 1–32 (MSHLKDPTTQYYTGEYPKQKQPTPGIQAKMTP) are disordered. The residue at position 39 (Lys39) is an N6-acetyllysine. Residue 53–77 (LVTGGDSGIGRAAAIAYAREGADVA) participates in NADP(+) binding. Ser186 is a binding site for substrate. Tyr199 serves as the catalytic Proton acceptor.

Belongs to the short-chain dehydrogenases/reductases (SDR) family.

This is an uncharacterized protein from Escherichia coli (strain K12).